Reading from the N-terminus, the 256-residue chain is Small ribosomal subunit protein eS1 (256 aa).

N-acetylalanine; partial is present on alanine 2.

It belongs to the eukaryotic ribosomal protein eS1 family. In terms of assembly, component of the small ribosomal subunit. Mature ribosomes consist of a small (40S) and a large (60S) subunit. The 40S subunit contains about 33 different proteins and 1 molecule of RNA (18S). The 60S subunit contains about 49 different proteins and 3 molecules of RNA (25S, 5.8S and 5S).

It is found in the cytoplasm. This Laccaria bicolor (strain S238N-H82 / ATCC MYA-4686) (Bicoloured deceiver) protein is Small ribosomal subunit protein eS1.